The primary structure comprises 174 residues: D(1B) dopamine receptor (174 aa).

Residues 1–10 (SILNLCIISV) traverse the membrane as a helical segment. Topologically, residues 11–32 (DRYWAISRPFCYERKMTQRVAL) are cytoplasmic. A helical transmembrane segment spans residues 33-54 (VMVGLAWTLSILISFIPVQLHW). The Extracellular segment spans residues 55 to 96 (HRDKVGSRDGLDPPSNLANGTPWEEAGESDRSAENCDSSLNR). Residues 64–88 (GLDPPSNLANGTPWEEAGESDRSAE) are disordered. Residue asparagine 95 is glycosylated (N-linked (GlcNAc...) asparagine). Residues 97–119 (TYAISSSLISFYIPVAIMIVTYT) form a helical membrane-spanning segment. Residues 120-169 (RIYRIAQVQIRRISSLERAAEHAQSCRSREACAPDSGLRASIKKETKVLK) are Cytoplasmic-facing. Residues 170–174 (TLSVI) form a helical membrane-spanning segment.

Belongs to the G-protein coupled receptor 1 family.

The protein resides in the cell membrane. Functionally, dopamine receptor whose activity is mediated by G proteins which activate adenylyl cyclase. The protein is D(1B) dopamine receptor (DRD5) of Bos taurus (Bovine).